The primary structure comprises 300 residues: Light-independent protochlorophyllide reductase iron-sulfur ATP-binding protein (300 aa).

Residues 43–48 and K72 contribute to the ATP site; that span reads GIGKST. S47 provides a ligand contact to Mg(2+). C128 and C162 together coordinate [4Fe-4S] cluster. 213 to 214 lines the ATP pocket; that stretch reads NR.

It belongs to the NifH/BchL/ChlL family. In terms of assembly, homodimer. Protochlorophyllide reductase is composed of three subunits; ChlL, ChlN and ChlB. Requires [4Fe-4S] cluster as cofactor.

It carries out the reaction chlorophyllide a + oxidized 2[4Fe-4S]-[ferredoxin] + 2 ADP + 2 phosphate = protochlorophyllide a + reduced 2[4Fe-4S]-[ferredoxin] + 2 ATP + 2 H2O. Its pathway is porphyrin-containing compound metabolism; chlorophyll biosynthesis (light-independent). Component of the dark-operative protochlorophyllide reductase (DPOR) that uses Mg-ATP and reduced ferredoxin to reduce ring D of protochlorophyllide (Pchlide) to form chlorophyllide a (Chlide). This reaction is light-independent. The L component serves as a unique electron donor to the NB-component of the complex, and binds Mg-ATP. In Synechococcus sp. (strain RCC307), this protein is Light-independent protochlorophyllide reductase iron-sulfur ATP-binding protein.